A 386-amino-acid chain; its full sequence is Succinate--CoA ligase [ADP-forming] subunit beta (386 aa).

The region spanning 9-244 (KEILRKYGVP…HDEEDPLETR (236 aa)) is the ATP-grasp domain. Residues lysine 46, 53–55 (GRG), glutamate 99, cysteine 102, and glutamate 107 each bind ATP. The Mg(2+) site is built by asparagine 199 and aspartate 213. Substrate contacts are provided by residues asparagine 264 and 321–323 (GIM).

The protein belongs to the succinate/malate CoA ligase beta subunit family. Heterotetramer of two alpha and two beta subunits. The cofactor is Mg(2+).

The catalysed reaction is succinate + ATP + CoA = succinyl-CoA + ADP + phosphate. It carries out the reaction GTP + succinate + CoA = succinyl-CoA + GDP + phosphate. It participates in carbohydrate metabolism; tricarboxylic acid cycle; succinate from succinyl-CoA (ligase route): step 1/1. Its function is as follows. Succinyl-CoA synthetase functions in the citric acid cycle (TCA), coupling the hydrolysis of succinyl-CoA to the synthesis of either ATP or GTP and thus represents the only step of substrate-level phosphorylation in the TCA. The beta subunit provides nucleotide specificity of the enzyme and binds the substrate succinate, while the binding sites for coenzyme A and phosphate are found in the alpha subunit. The sequence is that of Succinate--CoA ligase [ADP-forming] subunit beta from Rickettsia felis (strain ATCC VR-1525 / URRWXCal2) (Rickettsia azadi).